The following is a 209-amino-acid chain: Methylthioribulose-1-phosphate dehydratase (209 aa).

Zn(2+) contacts are provided by histidine 98 and histidine 100.

It belongs to the aldolase class II family. MtnB subfamily. Homotetramer. The cofactor is Zn(2+).

The catalysed reaction is 5-(methylsulfanyl)-D-ribulose 1-phosphate = 5-methylsulfanyl-2,3-dioxopentyl phosphate + H2O. It participates in amino-acid biosynthesis; L-methionine biosynthesis via salvage pathway; L-methionine from S-methyl-5-thio-alpha-D-ribose 1-phosphate: step 2/6. Its function is as follows. Catalyzes the dehydration of methylthioribulose-1-phosphate (MTRu-1-P) into 2,3-diketo-5-methylthiopentyl-1-phosphate (DK-MTP-1-P). In Bacillus subtilis (strain 168), this protein is Methylthioribulose-1-phosphate dehydratase (mtnB).